The following is a 373-amino-acid chain: MNNDRRFGLKRHITLPGELALDGGSLLTGIEIAYETYGHLNADASNAILICHPLTADQFAASDHPITGKPGWWSRMIGKGKPIDPERYCIICSNVLGSCLGSTGPSSFTPGTETPYAMNFPVITIRDMVRAQAKLLDYLGIRQLKAVIGGSMGGMQALEWASTYPDRVKSVVIIASTARHSAQNIAFHEVGRQAIMADPKWRQGNYYEEKDPPVAGLAVARMAAHITYLSESGLTARFGRRLQSRQEKSFGFDADFQIESYLRHQGIRFVERFDANSYLYITRATDYFDLAEEHGGKLANAFRGTKSRFCVISFDSDWLYPTSESRVIVHALNAAGAAVSFMELSNPNGHDSFLLDAPDLHRTVHGFLEGDRA.

Residues 46 to 355 (NAILICHPLT…NPNGHDSFLL (310 aa)) form the AB hydrolase-1 domain. Ser151 functions as the Nucleophile in the catalytic mechanism. Arg221 is a substrate binding site. Catalysis depends on residues Asp317 and His350. Asp351 lines the substrate pocket.

This sequence belongs to the AB hydrolase superfamily. MetX family. In terms of assembly, homodimer.

Its subcellular location is the cytoplasm. The enzyme catalyses L-homoserine + acetyl-CoA = O-acetyl-L-homoserine + CoA. It participates in amino-acid biosynthesis; L-methionine biosynthesis via de novo pathway; O-acetyl-L-homoserine from L-homoserine: step 1/1. Transfers an acetyl group from acetyl-CoA to L-homoserine, forming acetyl-L-homoserine. This is Homoserine O-acetyltransferase from Zymomonas mobilis subsp. mobilis (strain ATCC 31821 / ZM4 / CP4).